The chain runs to 146 residues: Gonadotropin subunit beta-2 (146 aa).

The N-terminal stretch at 1–22 (MTVEISKVFVLMMLNLFLGASS) is a signal peptide. 6 cysteine pairs are disulfide-bonded: Cys37/Cys85, Cys51/Cys100, Cys54/Cys138, Cys62/Cys116, Cys66/Cys118, and Cys121/Cys128. The N-linked (GlcNAc...) asparagine glycan is linked to Asn41.

The protein belongs to the glycoprotein hormones subunit beta family. As to quaternary structure, heterodimer of an alpha and a beta chain.

The protein localises to the secreted. Involved in gametogenesis and steroidogenesis. This chain is Gonadotropin subunit beta-2 (cgbb), found in Trichopodus trichopterus (Three spot gourami).